A 140-amino-acid polypeptide reads, in one-letter code: Protein ARABIDOPSIS THALIANA ANTHER 7 (140 aa).

The signal sequence occupies residues 1-20 (MKIHAILVVAFLVLMKTAVS). 4 disulfide bridges follow: cysteine 29–cysteine 87, cysteine 39–cysteine 54, cysteine 55–cysteine 111, and cysteine 85–cysteine 125.

This sequence belongs to the plant LTP family. Tapetum-specific. Also present in pollen.

The protein resides in the endoplasmic reticulum lumen. The polypeptide is Protein ARABIDOPSIS THALIANA ANTHER 7 (Arabidopsis thaliana (Mouse-ear cress)).